A 127-amino-acid polypeptide reads, in one-letter code: Large ribosomal subunit protein uL22 (127 aa).

It belongs to the universal ribosomal protein uL22 family. As to quaternary structure, part of the 50S ribosomal subunit.

Functionally, this protein binds specifically to 23S rRNA; its binding is stimulated by other ribosomal proteins, e.g. L4, L17, and L20. It is important during the early stages of 50S assembly. It makes multiple contacts with different domains of the 23S rRNA in the assembled 50S subunit and ribosome. Its function is as follows. The globular domain of the protein is located near the polypeptide exit tunnel on the outside of the subunit, while an extended beta-hairpin is found that lines the wall of the exit tunnel in the center of the 70S ribosome. In Methylorubrum populi (strain ATCC BAA-705 / NCIMB 13946 / BJ001) (Methylobacterium populi), this protein is Large ribosomal subunit protein uL22.